A 135-amino-acid polypeptide reads, in one-letter code: UPF0102 protein PGN_1801 (135 aa).

It belongs to the UPF0102 family.

This chain is UPF0102 protein PGN_1801, found in Porphyromonas gingivalis (strain ATCC 33277 / DSM 20709 / CIP 103683 / JCM 12257 / NCTC 11834 / 2561).